We begin with the raw amino-acid sequence, 248 residues long: Tetraspanin-18 (248 aa).

Residues 1 to 13 (MEGDCLSCMKYLM) are Cytoplasmic-facing. A helical transmembrane segment spans residues 14 to 34 (FVFNFFIFLGGACLLAIGIWV). The Extracellular portion of the chain corresponds to 35-49 (MVDPTGFREIVAANP). A helical transmembrane segment spans residues 50 to 70 (LLLTGAYILLAMGGLLFLLGF). The Cytoplasmic segment spans residues 71–83 (LGCCGAVRENKCL). Residues 84 to 104 (LLFFFLFILIIFLAELSAAIL) form a helical membrane-spanning segment. Residues 105–223 (AFIFRENLTR…TFETYVYLAG (119 aa)) are Extracellular-facing. 2 N-linked (GlcNAc...) asparagine glycosylation sites follow: Asn111 and Asn129. A helical transmembrane segment spans residues 224 to 244 (ALAIGVLAIELFAMIFAMCLF). Residues 245-248 (RGIQ) are Cytoplasmic-facing.

This sequence belongs to the tetraspanin (TM4SF) family. As to quaternary structure, interacts with ORAI1; this interaction regulates ORAI1 exit from the endoplasmic (ER), and/or Golgi, and trafficking to the cell surface. Highly expressed in primary endothelial cells. Expressed in the embryo heart. Weakly expressed the embryo skeletal muscle.

The protein resides in the membrane. In terms of biological role, plays a role in the cell surface localization of ORAI1 and may participate in the regulation of Ca(2+) signaling and the VWF release in response to inflammatory stimuli. The chain is Tetraspanin-18 from Homo sapiens (Human).